A 714-amino-acid polypeptide reads, in one-letter code: Stellatatriene synthase (714 aa).

A stellata-2,6,19-trien synthase region spans residues 1–325; sequence MEYKFSTVVD…RYNSSGSFSD (325 aa). Residues Asp-92 and Asp-96 each coordinate Mg(2+). The DDXXD motif 1 motif lies at 92–96; the sequence is DDVTD. The NSE motif motif lies at 276–284; it reads YLKIVEEYK. Residues 326–713 are geranylgeranyl diphosphate synthase; sequence HQLELMKNGV…LRLIMELLKT (388 aa). The interval 332 to 356 is disordered; it reads KNGVPKDPASGSTNGTSNGTSNGTS. Residues 341-356 are compositionally biased toward low complexity; the sequence is SGSTNGTSNGTSNGTS. Isopentenyl diphosphate is bound by residues Lys-434, Arg-437, and His-466. Mg(2+) is bound by residues Asp-473 and Asp-477. The DDXXD motif 2 motif lies at 473–477; the sequence is DDVED. Residue Arg-482 coordinates dimethylallyl diphosphate. An isopentenyl diphosphate-binding site is contributed by Arg-483. 6 residues coordinate dimethylallyl diphosphate: Lys-560, Thr-561, Gln-596, Asn-603, Lys-613, and Lys-623.

In the N-terminal section; belongs to the terpene synthase family. It in the C-terminal section; belongs to the FPP/GGPP synthase family. In terms of assembly, hexamer.

The enzyme catalyses 4 isopentenyl diphosphate + dimethylallyl diphosphate = (2E,6E,10E,14E)-geranylfarnesyl diphosphate + 4 diphosphate. The catalysed reaction is (2E,6E,10E,14E)-geranylfarnesyl diphosphate = stellata-2,6,19-triene + diphosphate. Its pathway is secondary metabolite biosynthesis; terpenoid biosynthesis. Multifunctional diterpene synthase; part of the gene cluster that mediates the biosynthesis of the sesterterpene stellatic acid. The first step in the pathway is performed by the stellatatriene synthase that possesses both prenyl transferase and terpene cyclase activity, converting isopentenyl diphosphate and dimethylallyl diphosphate into geranylgeranyl diphosphate (GGDP) and then converting GGDP into stellata-2,6,19-triene. The cytochrome P450 monooxygenase Stl-P450 then catalyzes three successive oxidation reactions on the C-20 methyl group to generate the carboxylic acid of stellatic acid. In Emericella variicolor (Aspergillus stellatus), this protein is Stellatatriene synthase.